Reading from the N-terminus, the 232-residue chain is Lipoprotein-releasing system ATP-binding protein LolD (232 aa).

The ABC transporter domain maps to 11-231 (VYLHDIRRQY…SLENGHVVEL (221 aa)). 47 to 54 (APSGSGKS) contributes to the ATP binding site.

It belongs to the ABC transporter superfamily. Lipoprotein translocase (TC 3.A.1.125) family. As to quaternary structure, the complex is composed of two ATP-binding proteins (LolD) and two transmembrane proteins (LolC and LolE).

The protein resides in the cell inner membrane. Functionally, part of the ABC transporter complex LolCDE involved in the translocation of mature outer membrane-directed lipoproteins, from the inner membrane to the periplasmic chaperone, LolA. Responsible for the formation of the LolA-lipoprotein complex in an ATP-dependent manner. This Nitrobacter hamburgensis (strain DSM 10229 / NCIMB 13809 / X14) protein is Lipoprotein-releasing system ATP-binding protein LolD.